Here is a 215-residue protein sequence, read N- to C-terminus: Probable transaldolase (215 aa).

Lys83 functions as the Schiff-base intermediate with substrate in the catalytic mechanism.

It belongs to the transaldolase family. Type 3B subfamily.

Its subcellular location is the cytoplasm. The enzyme catalyses D-sedoheptulose 7-phosphate + D-glyceraldehyde 3-phosphate = D-erythrose 4-phosphate + beta-D-fructose 6-phosphate. It participates in carbohydrate degradation; pentose phosphate pathway; D-glyceraldehyde 3-phosphate and beta-D-fructose 6-phosphate from D-ribose 5-phosphate and D-xylulose 5-phosphate (non-oxidative stage): step 2/3. Transaldolase is important for the balance of metabolites in the pentose-phosphate pathway. The polypeptide is Probable transaldolase (Moorella thermoacetica (strain ATCC 39073 / JCM 9320)).